A 279-amino-acid polypeptide reads, in one-letter code: Dermonecrotic toxin StSicTox-betaIB1i (279 aa).

His-12 is a catalytic residue. Positions 32 and 34 each coordinate Mg(2+). Catalysis depends on His-48, which acts as the Nucleophile. Disulfide bonds link Cys-52–Cys-58 and Cys-54–Cys-198. Asp-92 serves as a coordination point for Mg(2+).

Belongs to the arthropod phospholipase D family. Class II subfamily. Class IIb sub-subfamily. Mg(2+) serves as cofactor. In terms of tissue distribution, expressed by the venom gland.

The protein localises to the secreted. It carries out the reaction an N-(acyl)-sphingosylphosphocholine = an N-(acyl)-sphingosyl-1,3-cyclic phosphate + choline. The enzyme catalyses N-hexanoyl-sphing-4-enine-1-phosphocholine = N-(hexanoyl)-sphing-4-enine-1,3-cyclic phosphate + choline. The catalysed reaction is an N-(acyl)-sphingosylphosphoethanolamine = an N-(acyl)-sphingosyl-1,3-cyclic phosphate + ethanolamine. It catalyses the reaction N-dodecanoyl-heptadecasphing-4-enine-1-phosphoethanolamine = N-dodecanoyl-heptadecasphing-4-enine-1,3-cyclic phosphate + ethanolamine. It carries out the reaction a 1-acyl-sn-glycero-3-phosphoethanolamine = a 1-acyl-sn-glycero-2,3-cyclic phosphate + ethanolamine. The enzyme catalyses 1-tetradecanoyl-sn-glycero-3-phosphoethanolamine = 1-tetradecanoyl-sn-glycero-2,3-cyclic phosphate + ethanolamine. Functionally, dermonecrotic toxins cleave the phosphodiester linkage between the phosphate and headgroup of certain phospholipids (sphingolipid and lysolipid substrates), forming an alcohol (often choline) and a cyclic phosphate. This toxin acts on lysophosphatidylethanolamine (LPE) and ceramide phosphoethanolamine (CPE) with high activity. This toxin acts on sphingomyelin (SM) with very low activity and is not active on lysophosphatidylserine (LPS), lysophosphatidylcholine (LPC) and lysophosphatidylglycerol (LPG). It acts by transphosphatidylation, releasing exclusively cyclic phosphate as second products. It is not surprising that spider toxins have affinity for ethanolamine-containing sphingolipids since they are common in insect prey. Induces dermonecrosis, hemolysis, increased vascular permeability, edema, inflammatory response, and platelet aggregation. This is Dermonecrotic toxin StSicTox-betaIB1i from Sicarius terrosus (Cave spider).